The chain runs to 617 residues: Actin-binding protein (617 aa).

Residues 7-136 form the ADF-H domain; the sequence is DATTHSRDIE…DEEELLTKIS (130 aa). Disordered stretches follow at residues 169–223 and 325–574; these read PSLA…LSDN and AEKK…GEDN. The 1-1 repeat unit spans residues 202-211; it reads ADDWDEPEIK. Positions 202–600 are 3 X 10 AA approximate repeats; it reads ADDWDEPEIK…DDDWWLGELE (399 aa). Composition is skewed to basic and acidic residues over residues 340–351 and 359–375; these read EEQKPVETKTEI and DEMK…KLGA. The span at 400 to 411 shows a compositional bias: polar residues; the sequence is TFGQPAANSKPA. Composition is skewed to acidic residues over residues 437–453, 483–502, and 516–530; these read EHEE…DEDE, EPVE…EEEA, and PEPE…EEEA. 4 tandem repeats follow at residues 444–453, 495–510, 523–538, and 591–600. Residues 495–538 are 2 X 16 AA repeats of E(7)-A-P-A-P-S-L-P-S-R; the sequence is EEEEEEEAPAPSLPSRNAAPEPEPEQPQEEEEEEEAPAPSLPSR. In terms of domain architecture, SH3 spans 557–617; the sequence is AEAPWATAEY…FPSNYVVLGN (61 aa).

The protein resides in the cytoplasm. It localises to the cytoskeleton. In terms of biological role, may be involved in the spatial organization of cell surface growth. An overproduction of ABP1 causes the assembly of the cortical actin skeleton at inappropriate sites on the cell surface, resulting in delocalized surface growth. This is Actin-binding protein (ABP1) from Maudiozyma exigua (Yeast).